The primary structure comprises 98 residues: NADH-ubiquinone oxidoreductase chain 4L (98 aa).

3 consecutive transmembrane segments (helical) span residues 1 to 21 (MPLIHINIMMAFIMSLVGLLM), 29 to 49 (ALLCLEGMMLSLFILTALLAL), and 61 to 81 (IILLVFAACEAAIGLALLVMI).

Belongs to the complex I subunit 4L family. In terms of assembly, core subunit of respiratory chain NADH dehydrogenase (Complex I) which is composed of 45 different subunits.

It localises to the mitochondrion inner membrane. It catalyses the reaction a ubiquinone + NADH + 5 H(+)(in) = a ubiquinol + NAD(+) + 4 H(+)(out). Its function is as follows. Core subunit of the mitochondrial membrane respiratory chain NADH dehydrogenase (Complex I) which catalyzes electron transfer from NADH through the respiratory chain, using ubiquinone as an electron acceptor. Part of the enzyme membrane arm which is embedded in the lipid bilayer and involved in proton translocation. The chain is NADH-ubiquinone oxidoreductase chain 4L (MT-ND4L) from Kogia breviceps (Pygmy sperm whale).